Here is a 189-residue protein sequence, read N- to C-terminus: Potassium-transporting ATPase KdpC subunit (189 aa).

Residues 10-30 (LTLVFCVFFSVCYILVLWIFA) form a helical membrane-spanning segment.

The protein belongs to the KdpC family. As to quaternary structure, the system is composed of three essential subunits: KdpA, KdpB and KdpC.

The protein localises to the cell inner membrane. Part of the high-affinity ATP-driven potassium transport (or Kdp) system, which catalyzes the hydrolysis of ATP coupled with the electrogenic transport of potassium into the cytoplasm. This subunit acts as a catalytic chaperone that increases the ATP-binding affinity of the ATP-hydrolyzing subunit KdpB by the formation of a transient KdpB/KdpC/ATP ternary complex. The sequence is that of Potassium-transporting ATPase KdpC subunit from Phocaeicola vulgatus (strain ATCC 8482 / DSM 1447 / JCM 5826 / CCUG 4940 / NBRC 14291 / NCTC 11154) (Bacteroides vulgatus).